We begin with the raw amino-acid sequence, 669 residues long: Threonine--tRNA ligase (669 aa).

One can recognise a TGS domain in the interval 3–60; that stretch reads DAQQITLLVDGEETKVTTGTTGAELFFERRDVVVARVNGELKDLDQELPEGAEVEGVT. The catalytic stretch occupies residues 260 to 566; the sequence is DHRKLGSELD…LTEHYAGAFP (307 aa). The Zn(2+) site is built by cysteine 365, histidine 416, and histidine 543.

It belongs to the class-II aminoacyl-tRNA synthetase family. As to quaternary structure, homodimer. The cofactor is Zn(2+).

It localises to the cytoplasm. The catalysed reaction is tRNA(Thr) + L-threonine + ATP = L-threonyl-tRNA(Thr) + AMP + diphosphate + H(+). Its function is as follows. Catalyzes the attachment of threonine to tRNA(Thr) in a two-step reaction: L-threonine is first activated by ATP to form Thr-AMP and then transferred to the acceptor end of tRNA(Thr). Also edits incorrectly charged L-seryl-tRNA(Thr). The sequence is that of Threonine--tRNA ligase from Pseudarthrobacter chlorophenolicus (strain ATCC 700700 / DSM 12829 / CIP 107037 / JCM 12360 / KCTC 9906 / NCIMB 13794 / A6) (Arthrobacter chlorophenolicus).